Here is a 307-residue protein sequence, read N- to C-terminus: Probable thioesterase KK1J (307 aa).

It belongs to the AMT4 thioesterase family.

It participates in secondary metabolite biosynthesis. Functionally, probable thioesterase; part of the gene cluster that mediates the biosynthesis of KK-1, a novel cyclic depsipeptide with 10 residues which is a promising active compound with high activity against many plant pathogens, especially Botrytis cinerea. Within the pathway, kk1J is not essential for the biosynthesis of KK-1, but plays a role for efficient production via correction of peptide chain synthesis by kk1B. The nonribosomal peptide synthetase (NRPS) kk1B catalyzes the elongation and cyclization of the decapeptide chain composed of 1 D-lactic acid residue (D-Lac), 1 pipecolic acid residue (Pip), 1 aspartic acid residue (Asp), 1 isoleucine residue (Ile), 1 glycine residue (Gly), 1 tyrosine residue (Tyr) and 4 valine residues (Val). The Asp, Ile and 3 Val residues are N-methylated by the 5 methyltransferase domains from the NRPS (found in modules 3, 5, 6, 7 and 9), whereas the Tyr residue is O-methylated by the cluster encoded O-methyltransferase kk1A. The thioesterase kk1J is likely to be involved in the corrective mechanism of peptide chain synthesis. The D-lactate dehydrogenase kk1H is involved in the synthesis of D-lactic acid from pyruvic acid, which is recognized by the A domain of the first kk1B module. The pyrroline-5-carboxylate reductase kk1I is involved in the synthesis of the L-pipecolic acid residue of KK-1 from delta-1-pyrroline-5-carboxylate (P5C), a metabolic intermediate of lysine. It still is unclear how kk1C and kk1D are involved in the production of KK-1. This Curvularia clavata protein is Probable thioesterase KK1J.